The following is a 142-amino-acid chain: Large ribosomal subunit protein uL13 (142 aa).

It belongs to the universal ribosomal protein uL13 family. As to quaternary structure, part of the 50S ribosomal subunit.

Its function is as follows. This protein is one of the early assembly proteins of the 50S ribosomal subunit, although it is not seen to bind rRNA by itself. It is important during the early stages of 50S assembly. The polypeptide is Large ribosomal subunit protein uL13 (Herminiimonas arsenicoxydans).